The primary structure comprises 80 residues: Putative membrane protein insertion efficiency factor (80 aa).

Belongs to the UPF0161 family.

It is found in the cell membrane. Could be involved in insertion of integral membrane proteins into the membrane. This is Putative membrane protein insertion efficiency factor from Shouchella clausii (strain KSM-K16) (Alkalihalobacillus clausii).